A 262-amino-acid chain; its full sequence is Phycoerythrobilin:ferredoxin oxidoreductase (262 aa).

The protein belongs to the HY2 family.

It carries out the reaction (3Z)-phycoerythrobilin + oxidized 2[4Fe-4S]-[ferredoxin] = 15,16-dihydrobiliverdin + reduced 2[4Fe-4S]-[ferredoxin] + 2 H(+). In terms of biological role, catalyzes the two-electron reduction of the C2 and C3(1) diene system of 15,16-dihydrobiliverdin. In Parasynechococcus marenigrum (strain WH8102), this protein is Phycoerythrobilin:ferredoxin oxidoreductase (pebB).